The sequence spans 570 residues: Eukaryotic translation initiation factor 2A (570 aa).

WD repeat units follow at residues 274-316 (EKKG…FDTI) and 318-358 (GPRN…EIIS). The tract at residues 468-526 (PPHLRKPLGGGGSAGPPSAAAPTPGNQNQRPAQPRANGNGNAPQPFRPQQSEQERKAFQ) is disordered. Low complexity predominate over residues 482–492 (GPPSAAAPTPG). Over residues 493 to 518 (NQNQRPAQPRANGNGNAPQPFRPQQS) the composition is skewed to polar residues. A coiled-coil region spans residues 519-541 (EQERKAFQLKKKVEEIKVLKQRV).

It belongs to the WD repeat EIF2A family.

Functions in the early steps of protein synthesis of a small number of specific mRNAs. Acts by directing the binding of methionyl-tRNAi to 40S ribosomal subunits. In contrast to the eIF-2 complex, it binds methionyl-tRNAi to 40S subunits in a codon-dependent manner, whereas the eIF-2 complex binds methionyl-tRNAi to 40S subunits in a GTP-dependent manner. In Caenorhabditis elegans, this protein is Eukaryotic translation initiation factor 2A.